We begin with the raw amino-acid sequence, 381 residues long: Cytochrome b (381 aa).

The next 4 helical transmembrane spans lie at 34-54, 78-99, 114-134, and 179-199; these read FGSLLGLCLIIQILTGLFLAM, WLIRNIHANGASLFFICVYLHI, WNIGVILLFLLMATAFVGYVL, and FFAFHFLLPFLILALTIIHLL. Heme b is bound by residues histidine 84 and histidine 98. The heme b site is built by histidine 183 and histidine 197. Histidine 202 is an a ubiquinone binding site. 4 helical membrane-spanning segments follow: residues 227-247, 289-309, 321-341, and 348-368; these read YKDLLGFFVMIFFLTTLALFM, LGGVLALLFSIFILMLVPLLH, LTQIFFWLLVANSIILTWIGG, and FITVGQIASVSYFSLFLIIMP.

The protein belongs to the cytochrome b family. As to quaternary structure, the cytochrome bc1 complex contains 3 respiratory subunits (MT-CYB, CYC1 and UQCRFS1), 2 core proteins (UQCRC1 and UQCRC2) and probably 6 low-molecular weight proteins. The cofactor is heme b.

It localises to the mitochondrion inner membrane. Its function is as follows. Component of the ubiquinol-cytochrome c reductase complex (complex III or cytochrome b-c1 complex) that is part of the mitochondrial respiratory chain. The b-c1 complex mediates electron transfer from ubiquinol to cytochrome c. Contributes to the generation of a proton gradient across the mitochondrial membrane that is then used for ATP synthesis. This is Cytochrome b (mt-cyb) from Sphyrna tiburo tiburo (Hammerhead shark).